Reading from the N-terminus, the 150-residue chain is Macrodomain Ter protein (150 aa).

Belongs to the MatP family. As to quaternary structure, homodimer.

The protein localises to the cytoplasm. Functionally, required for spatial organization of the terminus region of the chromosome (Ter macrodomain) during the cell cycle. Prevents early segregation of duplicated Ter macrodomains during cell division. Binds specifically to matS, which is a 13 bp signature motif repeated within the Ter macrodomain. The polypeptide is Macrodomain Ter protein (Salmonella agona (strain SL483)).